A 237-amino-acid polypeptide reads, in one-letter code: Lectin alpha chain (237 aa).

Mn(2+) is bound by residues Glu8 and Asp10. Ca(2+) contacts are provided by Asp10, Tyr12, Asn14, and Asp19. Tyr12 provides a ligand contact to a carbohydrate. Mn(2+) contacts are provided by Asp19, His24, and Ser34. Position 99 to 100 (99 to 100) interacts with a carbohydrate; sequence LY. Position 208 (Asp208) interacts with Ca(2+). Arg228 serves as a coordination point for a carbohydrate.

The protein belongs to the leguminous lectin family. In terms of assembly, equilibrium between homodimer and homotetramer. Oligomerization is pH-dependent with homotetramers forming at pH 6.5 and above. Post-translationally, the beta and gamma chains are produced by partial proteolytic processing of the lectin alpha chain by an asparaginyl endopeptidase. Mixture of 60% alpha lectin and 40% of its beta and gamma proteolytic fragments. Seed.

The protein resides in the vacuole. Its subcellular location is the aleurone grain. D-mannose/D-glucose-binding lectin. Induces histamine release in mast cells from hamster and rat. Induces lymphocyte proliferation and IFNG production. In Macropsychanthus bicolor (Dioclea rostrata), this protein is Lectin alpha chain.